The following is a 151-amino-acid chain: uncharacterized protein (151 aa).

This is an uncharacterized protein from Lepidoptera (butterflies and moths).